Here is a 185-residue protein sequence, read N- to C-terminus: MISSFRAQCAARVVREGGVIAYPTEAVWGLGCDPWNEDAVYRLLALKARPVEKGLIVVAAHIHQLDFLLEDLPDVWLERLAGTWPGPNTWLVPHQDRLPEWVTGVHDSVAVRVTDHPLVQELCYLTGPLISTSANPAGRPAARTRLRVEQYFHDELDGVLGGALGGRRNPSLIRDLVTGQVIRPA.

A YrdC-like domain is found at 4-185 (SFRAQCAARV…LVTGQVIRPA (182 aa)).

Belongs to the SUA5 family. TsaC subfamily.

It is found in the cytoplasm. It carries out the reaction L-threonine + hydrogencarbonate + ATP = L-threonylcarbamoyladenylate + diphosphate + H2O. In terms of biological role, required for the formation of a threonylcarbamoyl group on adenosine at position 37 (t(6)A37) in tRNAs that read codons beginning with adenine. Catalyzes the conversion of L-threonine, HCO(3)(-)/CO(2) and ATP to give threonylcarbamoyl-AMP (TC-AMP) as the acyladenylate intermediate, with the release of diphosphate. This Pseudomonas paraeruginosa (strain DSM 24068 / PA7) (Pseudomonas aeruginosa (strain PA7)) protein is Threonylcarbamoyl-AMP synthase.